A 180-amino-acid polypeptide reads, in one-letter code: Cytokinin-beta-glucosidase (180 aa).

Accumulates in young leaves and shoot tips.

Its function is as follows. Hydrolyzes cytokinin glucosides thus liberating free cytokinins. The protein is Cytokinin-beta-glucosidase (TROLC) of Nicotiana tabacum (Common tobacco).